A 335-amino-acid polypeptide reads, in one-letter code: Phosphate acyltransferase (335 aa).

It belongs to the PlsX family. As to quaternary structure, homodimer. Probably interacts with PlsY.

It is found in the cytoplasm. It catalyses the reaction a fatty acyl-[ACP] + phosphate = an acyl phosphate + holo-[ACP]. The protein operates within lipid metabolism; phospholipid metabolism. Functionally, catalyzes the reversible formation of acyl-phosphate (acyl-PO(4)) from acyl-[acyl-carrier-protein] (acyl-ACP). This enzyme utilizes acyl-ACP as fatty acyl donor, but not acyl-CoA. This Alkaliphilus oremlandii (strain OhILAs) (Clostridium oremlandii (strain OhILAs)) protein is Phosphate acyltransferase.